We begin with the raw amino-acid sequence, 232 residues long: Orotidine 5'-phosphate decarboxylase (232 aa).

Substrate contacts are provided by residues Asp-13, Lys-35, 62 to 71 (DLKFHDIPNT), Thr-122, Arg-182, Gln-191, Gly-211, and Arg-212. Lys-64 acts as the Proton donor in catalysis.

This sequence belongs to the OMP decarboxylase family. Type 1 subfamily. Homodimer.

It carries out the reaction orotidine 5'-phosphate + H(+) = UMP + CO2. It functions in the pathway pyrimidine metabolism; UMP biosynthesis via de novo pathway; UMP from orotate: step 2/2. Catalyzes the decarboxylation of orotidine 5'-monophosphate (OMP) to uridine 5'-monophosphate (UMP). The chain is Orotidine 5'-phosphate decarboxylase from Pseudomonas syringae pv. syringae (strain B728a).